Reading from the N-terminus, the 113-residue chain is 14 kDa zinc-binding protein (113 aa).

In terms of domain architecture, HIT spans 3-113; it reads IFGKIISKEI…GGRQMNWPPG (111 aa). The short motif at 97-101 is the Histidine triad motif element; it reads HIHVH.

As to quaternary structure, homodimer.

In Brassica juncea (Indian mustard), this protein is 14 kDa zinc-binding protein.